Reading from the N-terminus, the 314-residue chain is Glycine--tRNA ligase alpha subunit (314 aa).

It belongs to the class-II aminoacyl-tRNA synthetase family. In terms of assembly, tetramer of two alpha and two beta subunits.

The protein localises to the cytoplasm. It carries out the reaction tRNA(Gly) + glycine + ATP = glycyl-tRNA(Gly) + AMP + diphosphate. The chain is Glycine--tRNA ligase alpha subunit from Leuconostoc citreum (strain KM20).